A 70-amino-acid polypeptide reads, in one-letter code: Protein SlyX homolog (70 aa).

Belongs to the SlyX family.

This chain is Protein SlyX homolog, found in Shewanella piezotolerans (strain WP3 / JCM 13877).